The primary structure comprises 456 residues: UDP-N-acetylglucosamine 1-carboxyvinyltransferase (456 aa).

Residue 34-35 (KN) participates in phosphoenolpyruvate binding. R104 serves as a coordination point for UDP-N-acetyl-alpha-D-glucosamine. C128 acts as the Proton donor in catalysis. C128 carries the 2-(S-cysteinyl)pyruvic acid O-phosphothioketal modification. UDP-N-acetyl-alpha-D-glucosamine-binding residues include D319 and I341.

This sequence belongs to the EPSP synthase family. MurA subfamily.

It is found in the cytoplasm. It carries out the reaction phosphoenolpyruvate + UDP-N-acetyl-alpha-D-glucosamine = UDP-N-acetyl-3-O-(1-carboxyvinyl)-alpha-D-glucosamine + phosphate. The protein operates within cell wall biogenesis; peptidoglycan biosynthesis. Functionally, cell wall formation. Adds enolpyruvyl to UDP-N-acetylglucosamine. This Prochlorococcus marinus (strain AS9601) protein is UDP-N-acetylglucosamine 1-carboxyvinyltransferase.